Reading from the N-terminus, the 318-residue chain is Ribonuclease Z (318 aa).

Zn(2+)-binding residues include H62, H64, D66, H67, H140, D211, and H269. D66 functions as the Proton acceptor in the catalytic mechanism.

This sequence belongs to the RNase Z family. Homodimer. Requires Zn(2+) as cofactor.

The enzyme catalyses Endonucleolytic cleavage of RNA, removing extra 3' nucleotides from tRNA precursor, generating 3' termini of tRNAs. A 3'-hydroxy group is left at the tRNA terminus and a 5'-phosphoryl group is left at the trailer molecule.. Functionally, zinc phosphodiesterase, which displays some tRNA 3'-processing endonuclease activity. Probably involved in tRNA maturation, by removing a 3'-trailer from precursor tRNA. The chain is Ribonuclease Z from Brevibacillus brevis (strain 47 / JCM 6285 / NBRC 100599).